The primary structure comprises 361 residues: MSQKERPTFHRQEVNKTIWEVPVRYQNLSPVGSGAYGTVCSAYDEKTGLKVAVKKLSRPFQSIIHAKRTYRELRLLKHMKHENVIGLLDVFTPATSLEEFNDVYLVTHLMGADLNNIVKCQKLTDDHVQFLIYQILRGLKYIHSADIIHRDLKPSNLAVNEDCELKILDFGLARHTDDEMTGYVATRWYRAPEIMLNWMHYNMTVDIWSVGCIMAELLTGRTLFPGTDHINQLQQIMRLTGTPPASLISRMPSHEARTYINSLPQMPKRNFSEVFIGANPQAVDLLEKMLVLDTDKRITAAEALAHPYFAQYHDPDDEPEAEPFDQSFESRELDIEEWKRQTYEEVISFEPPVFDGDEMES.

A Protein kinase domain is found at 25-309; the sequence is YQNLSPVGSG…AAEALAHPYF (285 aa). Residues 31–39 and K54 contribute to the ATP site; that span reads VGSGAYGTV. D151 (proton acceptor) is an active-site residue. T181 carries the post-translational modification Phosphothreonine; by MAP2K6. Positions 181–183 match the TXY motif; the sequence is TGY. Y183 is subject to Phosphotyrosine; by MAP2K6.

The protein belongs to the protein kinase superfamily. CMGC Ser/Thr protein kinase family. MAP kinase subfamily. Requires Mg(2+) as cofactor. Post-translationally, dually phosphorylated on Thr-181 and Tyr-183, which activates the enzyme. As to expression, exclusively expressed in the ovary.

It is found in the cytoplasm. The protein localises to the nucleus. It carries out the reaction L-seryl-[protein] + ATP = O-phospho-L-seryl-[protein] + ADP + H(+). The catalysed reaction is L-threonyl-[protein] + ATP = O-phospho-L-threonyl-[protein] + ADP + H(+). Its activity is regulated as follows. Activated by threonine and tyrosine phosphorylation by the dual specificity kinase, MKK6. Its function is as follows. Serine/threonine kinase which acts as an essential component of the MAP kinase signal transduction pathway. Mapk14a is one of the four p38 MAPKs which play an important role in the cascades of cellular responses evoked by extracellular stimuli such as pro-inflammatory cytokines or physical stress leading to direct activation of transcription factors. Accordingly, p38 MAPKs phosphorylate a broad range of proteins and it has been estimated that they may have approximately 200 to 300 substrates each. Some of the targets are downstream kinases which are activated through phosphorylation and further phosphorylate additional targets. The chain is Mitogen-activated protein kinase 14A (mapk14a) from Cyprinus carpio (Common carp).